Here is a 341-residue protein sequence, read N- to C-terminus: Holliday junction branch migration complex subunit RuvB (341 aa).

Residues Met1–Tyr180 are large ATPase domain (RuvB-L). Residues Leu19, Arg20, Gly61, Lys64, Thr65, Thr66, Arg170, Tyr180, and Arg217 each coordinate ATP. Thr65 contacts Mg(2+). The tract at residues Asn181 to Gly251 is small ATPAse domain (RuvB-S). A head domain (RuvB-H) region spans residues Asp254–Phe341. Positions 309 and 314 each coordinate DNA.

Belongs to the RuvB family. Homohexamer. Forms an RuvA(8)-RuvB(12)-Holliday junction (HJ) complex. HJ DNA is sandwiched between 2 RuvA tetramers; dsDNA enters through RuvA and exits via RuvB. An RuvB hexamer assembles on each DNA strand where it exits the tetramer. Each RuvB hexamer is contacted by two RuvA subunits (via domain III) on 2 adjacent RuvB subunits; this complex drives branch migration. In the full resolvosome a probable DNA-RuvA(4)-RuvB(12)-RuvC(2) complex forms which resolves the HJ.

The protein resides in the cytoplasm. It catalyses the reaction ATP + H2O = ADP + phosphate + H(+). The RuvA-RuvB-RuvC complex processes Holliday junction (HJ) DNA during genetic recombination and DNA repair, while the RuvA-RuvB complex plays an important role in the rescue of blocked DNA replication forks via replication fork reversal (RFR). RuvA specifically binds to HJ cruciform DNA, conferring on it an open structure. The RuvB hexamer acts as an ATP-dependent pump, pulling dsDNA into and through the RuvAB complex. RuvB forms 2 homohexamers on either side of HJ DNA bound by 1 or 2 RuvA tetramers; 4 subunits per hexamer contact DNA at a time. Coordinated motions by a converter formed by DNA-disengaged RuvB subunits stimulates ATP hydrolysis and nucleotide exchange. Immobilization of the converter enables RuvB to convert the ATP-contained energy into a lever motion, pulling 2 nucleotides of DNA out of the RuvA tetramer per ATP hydrolyzed, thus driving DNA branch migration. The RuvB motors rotate together with the DNA substrate, which together with the progressing nucleotide cycle form the mechanistic basis for DNA recombination by continuous HJ branch migration. Branch migration allows RuvC to scan DNA until it finds its consensus sequence, where it cleaves and resolves cruciform DNA. The polypeptide is Holliday junction branch migration complex subunit RuvB (Leptospira borgpetersenii serovar Hardjo-bovis (strain JB197)).